The following is a 208-amino-acid chain: Ribosome maturation factor RimP (208 aa).

The segment at 165–208 is disordered; the sequence is TAQPKKGQRQGKEPAKESGQKKQLAEAAPRSGSKRSERGSEKRK. 2 stretches are compositionally biased toward basic and acidic residues: residues 174 to 188 and 198 to 208; these read QGKEPAKESGQKKQL and KRSERGSEKRK.

This sequence belongs to the RimP family.

The protein resides in the cytoplasm. In terms of biological role, required for maturation of 30S ribosomal subunits. This Sorangium cellulosum (strain So ce56) (Polyangium cellulosum (strain So ce56)) protein is Ribosome maturation factor RimP.